Reading from the N-terminus, the 343-residue chain is N-acetyl-gamma-glutamyl-phosphate reductase (343 aa).

Residue Cys-152 is part of the active site.

This sequence belongs to the NAGSA dehydrogenase family. Type 1 subfamily.

The protein resides in the cytoplasm. It catalyses the reaction N-acetyl-L-glutamate 5-semialdehyde + phosphate + NADP(+) = N-acetyl-L-glutamyl 5-phosphate + NADPH + H(+). The protein operates within amino-acid biosynthesis; L-arginine biosynthesis; N(2)-acetyl-L-ornithine from L-glutamate: step 3/4. In terms of biological role, catalyzes the NADPH-dependent reduction of N-acetyl-5-glutamyl phosphate to yield N-acetyl-L-glutamate 5-semialdehyde. In Methanopyrus kandleri (strain AV19 / DSM 6324 / JCM 9639 / NBRC 100938), this protein is N-acetyl-gamma-glutamyl-phosphate reductase.